The sequence spans 232 residues: Ribonuclease 3 (232 aa).

Residues 5–134 (NDAISKIIDY…LIGAIYIDGG (130 aa)) form the RNase III domain. Residue E47 coordinates Mg(2+). Residue D51 is part of the active site. Residues N120 and E123 each contribute to the Mg(2+) site. Residue E123 is part of the active site. The region spanning 159–228 (DPKTSLQEWT…AELMLEKIGK (70 aa)) is the DRBM domain.

This sequence belongs to the ribonuclease III family. As to quaternary structure, homodimer. Mg(2+) serves as cofactor.

It localises to the cytoplasm. It carries out the reaction Endonucleolytic cleavage to 5'-phosphomonoester.. Digests double-stranded RNA. Involved in the processing of primary rRNA transcript to yield the immediate precursors to the large and small rRNAs (23S and 16S). Processes some mRNAs, and tRNAs when they are encoded in the rRNA operon. Processes pre-crRNA and tracrRNA of type II CRISPR loci if present in the organism. The protein is Ribonuclease 3 of Wolbachia pipientis wMel.